A 50-amino-acid polypeptide reads, in one-letter code: Protein PndA (50 aa).

The helical transmembrane segment at 5 to 25 (TFLMMLIVVCVTILCFVWMVR) threads the bilayer.

This sequence belongs to the Hok/Gef family.

Its subcellular location is the cell inner membrane. When overexpressed kill the cells from the inside by interfering with a vital function in the cell membrane. In terms of biological role, toxic component of a type I toxin-antitoxin (TA) system. When expressed is involved in cellular Mg(2+) release and degradation of stable RNA. This chain is Protein PndA (pndA), found in Escherichia coli.